Consider the following 294-residue polypeptide: 3-methyl-2-oxobutanoate hydroxymethyltransferase (294 aa).

The segment covering 1–12 has biased composition (polar residues); that stretch reads MSASAESTNATP. Positions 1–21 are disordered; the sequence is MSASAESTNATPYGTLPPTAA. The Mg(2+) site is built by D69 and D112. 3-methyl-2-oxobutanoate is bound by residues 69–70, D112, and K141; that span reads DS. Residue E143 participates in Mg(2+) binding. E210 acts as the Proton acceptor in catalysis.

The protein belongs to the PanB family. In terms of assembly, homodecamer; pentamer of dimers. The cofactor is Mg(2+).

Its subcellular location is the cytoplasm. It catalyses the reaction 3-methyl-2-oxobutanoate + (6R)-5,10-methylene-5,6,7,8-tetrahydrofolate + H2O = 2-dehydropantoate + (6S)-5,6,7,8-tetrahydrofolate. The protein operates within cofactor biosynthesis; (R)-pantothenate biosynthesis; (R)-pantoate from 3-methyl-2-oxobutanoate: step 1/2. Catalyzes the reversible reaction in which hydroxymethyl group from 5,10-methylenetetrahydrofolate is transferred onto alpha-ketoisovalerate to form ketopantoate. This chain is 3-methyl-2-oxobutanoate hydroxymethyltransferase, found in Albidiferax ferrireducens (strain ATCC BAA-621 / DSM 15236 / T118) (Rhodoferax ferrireducens).